A 700-amino-acid polypeptide reads, in one-letter code: Hedgehog-interacting protein (700 aa).

An N-terminal signal peptide occupies residues 1–17; that stretch reads MLKMLSFKLLLLAVALG. The N-linked (GlcNAc...) asparagine glycan is linked to Asn-99. 10 cysteine pairs are disulfide-bonded: Cys-216/Cys-536, Cys-218/Cys-543, Cys-402/Cys-624, Cys-435/Cys-452, Cys-500/Cys-594, Cys-612/Cys-623, Cys-625/Cys-634, Cys-639/Cys-649, Cys-643/Cys-655, and Cys-657/Cys-666. The segment at 376–388 is interaction with SHH zinc binding site; it reads LDDMEEMDGLSDF. Asp-383 contributes to the Zn(2+) binding site. Residues Asn-416, Asn-447, and Asn-459 are each glycosylated (N-linked (GlcNAc...) asparagine). EGF-like domains follow at residues 607–634 and 635–667; these read DCSR…GDFC and RIAK…PQCE.

Belongs to the HHIP family. In terms of assembly, interacts with all three hedgehog family members, SHH, IHH and DHH. As to expression, in the adult brain, high expression found in the ventral cochlear nucleus, medial habenula, indusium griseum and tenia tecta. Some expression also in the caudate putamen, the nucleus accumbens, the ventral pallidum and in the superficial layers of the superior colliculus.

It is found in the cell membrane. The protein localises to the secreted. Functionally, modulates hedgehog signaling in several cell types, including brain and lung through direct interaction with members of the hedgehog family. Soluble forms inhibit Shh-induced differentiation in the fibroblast cell line C3H/10T1/2. The sequence is that of Hedgehog-interacting protein (Hhip) from Mus musculus (Mouse).